A 91-amino-acid polypeptide reads, in one-letter code: PqqA binding protein (91 aa).

It belongs to the PqqD family. Monomer. Interacts with PqqE.

It participates in cofactor biosynthesis; pyrroloquinoline quinone biosynthesis. In terms of biological role, functions as a PqqA binding protein and presents PqqA to PqqE, in the pyrroloquinoline quinone (PQQ) biosynthetic pathway. The protein is PqqA binding protein of Pseudomonas fluorescens (strain SBW25).